Reading from the N-terminus, the 214-residue chain is Probable GTP-binding protein EngB (214 aa).

The region spanning 30–204 (EGFEVAFAGR…YTVLAGWMEL (175 aa)) is the EngB-type G domain. GTP-binding positions include 38–45 (GRSNAGKS), 64–68 (GRTQL), 82–85 (DLPG), 149–152 (TKAD), and 182–185 (LFSA). Mg(2+) contacts are provided by serine 45 and threonine 66.

Belongs to the TRAFAC class TrmE-Era-EngA-EngB-Septin-like GTPase superfamily. EngB GTPase family. It depends on Mg(2+) as a cofactor.

Its function is as follows. Necessary for normal cell division and for the maintenance of normal septation. The sequence is that of Probable GTP-binding protein EngB from Pseudomonas fluorescens (strain Pf0-1).